The sequence spans 626 residues: Ankyrin repeat domain-containing protein 55 (626 aa).

9 ANK repeats span residues Val-25–Glu-54, Glu-59–Thr-88, Tyr-92–Lys-124, Asn-125–His-156, Glu-160–Leu-189, Asp-193–Ile-222, Ser-229–Ala-259, Asp-263–Leu-292, and Asn-296–Ala-325. Basic and acidic residues predominate over residues Lys-354–Glu-372. Disordered regions lie at residues Lys-354–Val-377, His-455–Asn-491, and Gln-522–Asn-626. The residue at position 474 (Ser-474) is a Phosphoserine. The segment covering Gln-604–Glu-614 has biased composition (basic and acidic residues). Residues Gly-616–Asn-626 show a composition bias toward polar residues.

The chain is Ankyrin repeat domain-containing protein 55 (Ankrd55) from Mus musculus (Mouse).